We begin with the raw amino-acid sequence, 1023 residues long: Presequence protease, mitochondrial (1023 aa).

Residues 1-62 constitute a mitochondrion transit peptide; that stretch reads MFRQSKTIIT…PDLFLTAVKL (62 aa). His-99 lines the Zn(2+) pocket. The active-site Proton acceptor is Glu-102. 2 residues coordinate Zn(2+): His-103 and Glu-200. A disulfide bridge links Cys-114 with Cys-551.

Belongs to the peptidase M16 family. PreP subfamily. As to quaternary structure, monomer and homodimer; homodimerization is induced by binding of the substrate. The cofactor is Zn(2+). A disulfide bond locks the enzyme in the closed conformation preventing substrate entry into the catalytic chamber.

The protein resides in the mitochondrion matrix. Its activity is regulated as follows. Mainly exists in a closed and catalytically competent conformation but a closed-to-open switch allows substrate entry into the catalytic chamber. Substrate binding induces closure and dimerization. A disulfide bond may lock the enzyme in a closed conformation preventing substrate entry into the catalytic chamber, participating in redox regulation of the enzyme. Inhibited by metal-chelating agents. Inhibited by nickel and zinc excess, and slightly activated by manganese. Functionally, metalloendopeptidase of the mitochondrial matrix that functions in peptide cleavage and degradation rather than in protein processing. Has an ATP-independent activity. Specifically cleaves peptides in the range of 5 to 65 residues. Shows a preference for cleavage after small polar residues and before basic residues, but without any positional preference. Degrades the transit peptides of mitochondrial proteins after their cleavage. Also degrades other unstructured peptides. The protein is Presequence protease, mitochondrial (pitrm1) of Danio rerio (Zebrafish).